A 966-amino-acid polypeptide reads, in one-letter code: Isoleucine--tRNA ligase (966 aa).

Residues 1–16 (MSDDKRAKSDKNEKNK) show a composition bias toward basic and acidic residues. Residues 1-24 (MSDDKRAKSDKNEKNKYPVNLLDT) are disordered. A 'HIGH' region motif is present at residues 69 to 79 (PYANGDIHIGH). Glutamate 599 is an L-isoleucyl-5'-AMP binding site. Positions 640–644 (KMSKS) match the 'KMSKS' region motif. Lysine 643 is a binding site for ATP. Zn(2+) contacts are provided by cysteine 929, cysteine 932, cysteine 949, and cysteine 952.

Belongs to the class-I aminoacyl-tRNA synthetase family. IleS type 1 subfamily. As to quaternary structure, monomer. The cofactor is Zn(2+).

It localises to the cytoplasm. The enzyme catalyses tRNA(Ile) + L-isoleucine + ATP = L-isoleucyl-tRNA(Ile) + AMP + diphosphate. Functionally, catalyzes the attachment of isoleucine to tRNA(Ile). As IleRS can inadvertently accommodate and process structurally similar amino acids such as valine, to avoid such errors it has two additional distinct tRNA(Ile)-dependent editing activities. One activity is designated as 'pretransfer' editing and involves the hydrolysis of activated Val-AMP. The other activity is designated 'posttransfer' editing and involves deacylation of mischarged Val-tRNA(Ile). The chain is Isoleucine--tRNA ligase from Cupriavidus taiwanensis (strain DSM 17343 / BCRC 17206 / CCUG 44338 / CIP 107171 / LMG 19424 / R1) (Ralstonia taiwanensis (strain LMG 19424)).